The chain runs to 206 residues: Orotate phosphoribosyltransferase (206 aa).

Residues arginine 97, lysine 98, lysine 101, and 125–133 (NDVIASGRS) each bind 5-phospho-alpha-D-ribose 1-diphosphate. Arginine 157 provides a ligand contact to orotate.

The protein belongs to the purine/pyrimidine phosphoribosyltransferase family. PyrE subfamily. In terms of assembly, homodimer. The cofactor is Mg(2+).

It carries out the reaction orotidine 5'-phosphate + diphosphate = orotate + 5-phospho-alpha-D-ribose 1-diphosphate. Its pathway is pyrimidine metabolism; UMP biosynthesis via de novo pathway; UMP from orotate: step 1/2. Functionally, catalyzes the transfer of a ribosyl phosphate group from 5-phosphoribose 1-diphosphate to orotate, leading to the formation of orotidine monophosphate (OMP). This Chlamydia caviae (strain ATCC VR-813 / DSM 19441 / 03DC25 / GPIC) (Chlamydophila caviae) protein is Orotate phosphoribosyltransferase.